The primary structure comprises 261 residues: Ribonuclease HII (261 aa).

An RNase H type-2 domain is found at 72–260 (AVICGIDEVG…IKSIVLEKLD (189 aa)). A divalent metal cation-binding residues include aspartate 78, glutamate 79, and aspartate 170.

This sequence belongs to the RNase HII family. Mn(2+) is required as a cofactor. It depends on Mg(2+) as a cofactor.

The protein resides in the cytoplasm. It carries out the reaction Endonucleolytic cleavage to 5'-phosphomonoester.. Its function is as follows. Endonuclease that specifically degrades the RNA of RNA-DNA hybrids. This chain is Ribonuclease HII, found in Staphylococcus carnosus (strain TM300).